A 100-amino-acid chain; its full sequence is MAKRSMIEREKKRIKLHQKYESKRQALLEEYNSTSDFNLKLEIHSKIQRLPRNSSKIRIRNRCWKTGRPRGYYRDFGVSRHVLREMAHQCLLPGVTKSSW.

Belongs to the universal ribosomal protein uS14 family. In terms of assembly, part of the 30S ribosomal subunit.

It localises to the plastid. It is found in the chloroplast. Binds 16S rRNA, required for the assembly of 30S particles. The polypeptide is Small ribosomal subunit protein uS14c (Thalassiosira pseudonana (Marine diatom)).